A 459-amino-acid chain; its full sequence is Cysteine--tRNA ligase (459 aa).

Cys-28 contacts Zn(2+). The 'HIGH' region motif lies at Val-30–His-40. Positions 209, 234, and 238 each coordinate Zn(2+). The 'KMSKS' region motif lies at Lys-266 to Ser-270. Lys-269 contacts ATP.

The protein belongs to the class-I aminoacyl-tRNA synthetase family. In terms of assembly, monomer. Requires Zn(2+) as cofactor.

The protein localises to the cytoplasm. The catalysed reaction is tRNA(Cys) + L-cysteine + ATP = L-cysteinyl-tRNA(Cys) + AMP + diphosphate. This chain is Cysteine--tRNA ligase, found in Actinobacillus pleuropneumoniae serotype 3 (strain JL03).